The sequence spans 233 residues: DnaA regulatory inactivator Hda (233 aa).

It belongs to the DnaA family. HdA subfamily. The active form seems to be an ADP-bound monomer. Forms the RIDA complex (regulatory inactivation of DnaA) of ATP-DnaA, ADP-Hda and the DNA-loaded beta sliding clamp (dnaN).

Its function is as follows. Mediates the interaction of DNA replication initiator protein DnaA with DNA polymerase subunit beta sliding clamp (dnaN). Stimulates hydrolysis of ATP-DnaA to ADP-DnaA, rendering DnaA inactive for reinitiation, a process called regulatory inhibition of DnaA or RIDA. The protein is DnaA regulatory inactivator Hda of Escherichia fergusonii (strain ATCC 35469 / DSM 13698 / CCUG 18766 / IAM 14443 / JCM 21226 / LMG 7866 / NBRC 102419 / NCTC 12128 / CDC 0568-73).